The chain runs to 237 residues: Listeriolysin regulatory protein (237 aa).

In terms of domain architecture, HTH crp-type spans 137 to 212; that stretch reads NGKLGSICGQ…NSCFYVQNLD (76 aa).

In terms of biological role, positively regulates expression of listeriolysin, of 1-phosphadidylinositol phosphodiesterase (PI-PLC) and other virulence factors. The chain is Listeriolysin regulatory protein (prfA) from Listeria monocytogenes serovar 1/2a (strain ATCC BAA-679 / EGD-e).